The sequence spans 1012 residues: Formate dehydrogenase subunit alpha (1012 aa).

A signal peptide (tat-type signal) is located at residues 1–35 (MLIKRRAFLKLTAAGATLSAFGGLGVDLAPAKAQA). One can recognise a 4Fe-4S Mo/W bis-MGD-type domain in the interval 45–103 (AKQTTSVCCYCSVGCGLIVHTDKKTNRAINVEGDPDHPINEGSLCAKGASTWQLAENER). 4 residues coordinate [4Fe-4S] cluster: C52, C55, C59, and C89. Residue U193 coordinates W-bis(molybdopterin guanine dinucleotide). Position 193 (U193) is a non-standard amino acid, selenocysteine. Residues T393, K395, K398, L428, and N430 each contribute to the Ca(2+) site. C852 and C879 form a disulfide bridge.

It belongs to the prokaryotic molybdopterin-containing oxidoreductase family. In terms of assembly, heterodimer of alpha (FdhA) and beta (FdhB) subunits. Requires [4Fe-4S] cluster as cofactor. The cofactor is W-bis(molybdopterin guanine dinucleotide). In terms of processing, the disulfide bond is likely to be broken in the active form of this enzyme. Predicted to be exported by the Tat system. The position of the signal peptide cleavage has been experimentally proven.

Its subcellular location is the periplasm. The enzyme catalyses formate + NAD(+) = CO2 + NADH. Functionally, alpha chain of the formate dehydrogenase (FDH) catalyze the reversible two-electron oxidation of formate to carbon dioxide. FDH loses activity in the presence of air, but this activity can be restored. The alpha subunit of formate dehydrogenase forms the active site. The polypeptide is Formate dehydrogenase subunit alpha (Megalodesulfovibrio gigas (Desulfovibrio gigas)).